The following is a 197-amino-acid chain: Phosphoheptose isomerase (197 aa).

An SIS domain is found at 34–196 (MVHCLLGGNK…DRTLFPQDEQ (163 aa)). Residue 49 to 51 (NGG) coordinates substrate. H58 and E62 together coordinate Zn(2+). Substrate contacts are provided by residues E62, 91 to 92 (ND), 117 to 119 (STS), S122, and Q172. Positions 172 and 180 each coordinate Zn(2+).

This sequence belongs to the SIS family. GmhA subfamily. Homotetramer. Zn(2+) serves as cofactor.

It is found in the cytoplasm. The catalysed reaction is 2 D-sedoheptulose 7-phosphate = D-glycero-alpha-D-manno-heptose 7-phosphate + D-glycero-beta-D-manno-heptose 7-phosphate. It functions in the pathway carbohydrate biosynthesis; D-glycero-D-manno-heptose 7-phosphate biosynthesis; D-glycero-alpha-D-manno-heptose 7-phosphate and D-glycero-beta-D-manno-heptose 7-phosphate from sedoheptulose 7-phosphate: step 1/1. Its function is as follows. Catalyzes the isomerization of sedoheptulose 7-phosphate in D-glycero-D-manno-heptose 7-phosphate. In Shewanella sediminis (strain HAW-EB3), this protein is Phosphoheptose isomerase.